The primary structure comprises 420 residues: Exodeoxyribonuclease 7 large subunit (420 aa).

This sequence belongs to the XseA family. In terms of assembly, heterooligomer composed of large and small subunits.

It localises to the cytoplasm. It catalyses the reaction Exonucleolytic cleavage in either 5'- to 3'- or 3'- to 5'-direction to yield nucleoside 5'-phosphates.. In terms of biological role, bidirectionally degrades single-stranded DNA into large acid-insoluble oligonucleotides, which are then degraded further into small acid-soluble oligonucleotides. This is Exodeoxyribonuclease 7 large subunit from Helicobacter pylori (strain HPAG1).